The primary structure comprises 601 residues: CDPK-related kinase 5 (601 aa).

A compositionally biased stretch (polar residues) spans 1-19; that stretch reads MGLCTSKPNSSNSDQTPAR. 2 disordered regions span residues 1 to 55 and 70 to 98; these read MGLC…KSPF and KKTP…PPPS. The N-myristoyl glycine moiety is linked to residue Gly2. The segment covering 26-35 has biased composition (low complexity); sequence SESVKPSSSS. The segment covering 36–48 has biased composition (polar residues); that stretch reads VNGEDQCVTTTNN. The Protein kinase domain maps to 148-410; sequence YELGDEVGRG…AAQALSHPWI (263 aa). ATP is bound by residues 154–162 and Lys180; that span reads VGRGHFGYT. Asp276 functions as the Proton acceptor in the catalytic mechanism. Ser316 carries the post-translational modification Phosphoserine. The segment at 415–445 is autoinhibitory domain; sequence DAKVPMDILVFKLMRAYLRSSSLRKAALRAL. The calmodulin binding (CaMBD) stretch occupies residues 434–454; that stretch reads SSSLRKAALRALSKTLTVDEL. EF-hand domains follow at residues 452–488, 489–524, 525–564, and 567–596; these read DELF…ATDA, MKDS…VHQL, EALD…GPSV, and HAVL…VSSR. Positions 467, 469, 471, 476, 508, 513, 546, 553, 578, and 580 each coordinate Ca(2+). Residue Ser582 is modified to Phosphoserine.

It belongs to the protein kinase superfamily. Ser/Thr protein kinase family. CDPK subfamily. In terms of assembly, binds calmodulin (CaM) in a calcium-dependent manner.

It localises to the membrane. It catalyses the reaction L-seryl-[protein] + ATP = O-phospho-L-seryl-[protein] + ADP + H(+). The enzyme catalyses L-threonyl-[protein] + ATP = O-phospho-L-threonyl-[protein] + ADP + H(+). With respect to regulation, activated by calcium and calmodulin. Autophosphorylation may play an important role in the regulation of the kinase activity. Functionally, may play a role in signal transduction pathways that involve calcium as a second messenger. The polypeptide is CDPK-related kinase 5 (CRK5) (Arabidopsis thaliana (Mouse-ear cress)).